Consider the following 485-residue polypeptide: Proline--tRNA ligase (485 aa).

The protein belongs to the class-II aminoacyl-tRNA synthetase family. ProS type 3 subfamily. In terms of assembly, homodimer.

The protein localises to the cytoplasm. The enzyme catalyses tRNA(Pro) + L-proline + ATP = L-prolyl-tRNA(Pro) + AMP + diphosphate. Catalyzes the attachment of proline to tRNA(Pro) in a two-step reaction: proline is first activated by ATP to form Pro-AMP and then transferred to the acceptor end of tRNA(Pro). This Aeropyrum pernix (strain ATCC 700893 / DSM 11879 / JCM 9820 / NBRC 100138 / K1) protein is Proline--tRNA ligase.